Consider the following 463-residue polypeptide: Ribosomal protein uS12 methylthiotransferase RimO (463 aa).

The 116-residue stretch at 11–126 (PKIGFVSLGC…VMEVVHTHCP (116 aa)) folds into the MTTase N-terminal domain. Residues cysteine 20, cysteine 56, cysteine 85, cysteine 161, cysteine 165, and cysteine 168 each coordinate [4Fe-4S] cluster. The region spanning 147–388 (LTPRHYAYLK…MAVAEEVSTA (242 aa)) is the Radical SAM core domain. Positions 391 to 463 (QRRVGQTMQV…QGHDLVGVPV (73 aa)) constitute a TRAM domain.

Belongs to the methylthiotransferase family. RimO subfamily. Requires [4Fe-4S] cluster as cofactor.

It is found in the cytoplasm. It catalyses the reaction L-aspartate(89)-[ribosomal protein uS12]-hydrogen + (sulfur carrier)-SH + AH2 + 2 S-adenosyl-L-methionine = 3-methylsulfanyl-L-aspartate(89)-[ribosomal protein uS12]-hydrogen + (sulfur carrier)-H + 5'-deoxyadenosine + L-methionine + A + S-adenosyl-L-homocysteine + 2 H(+). In terms of biological role, catalyzes the methylthiolation of an aspartic acid residue of ribosomal protein uS12. In Acidovorax sp. (strain JS42), this protein is Ribosomal protein uS12 methylthiotransferase RimO.